Consider the following 344-residue polypeptide: Tetraacyldisaccharide 4'-kinase (344 aa).

Residue 68–75 (TAGGNGKT) participates in ATP binding.

Belongs to the LpxK family.

The enzyme catalyses a lipid A disaccharide + ATP = a lipid IVA + ADP + H(+). Its pathway is glycolipid biosynthesis; lipid IV(A) biosynthesis; lipid IV(A) from (3R)-3-hydroxytetradecanoyl-[acyl-carrier-protein] and UDP-N-acetyl-alpha-D-glucosamine: step 6/6. In terms of biological role, transfers the gamma-phosphate of ATP to the 4'-position of a tetraacyldisaccharide 1-phosphate intermediate (termed DS-1-P) to form tetraacyldisaccharide 1,4'-bis-phosphate (lipid IVA). The polypeptide is Tetraacyldisaccharide 4'-kinase (Photobacterium profundum (strain SS9)).